The following is a 116-amino-acid chain: Large ribosomal subunit protein bL20 (116 aa).

Belongs to the bacterial ribosomal protein bL20 family.

Its function is as follows. Binds directly to 23S ribosomal RNA and is necessary for the in vitro assembly process of the 50S ribosomal subunit. It is not involved in the protein synthesizing functions of that subunit. This is Large ribosomal subunit protein bL20 from Thermosynechococcus vestitus (strain NIES-2133 / IAM M-273 / BP-1).